A 1171-amino-acid polypeptide reads, in one-letter code: Phytochrome B (1171 aa).

Over residues 1-19 (MASGSRATPTRSPSSARPA) the composition is skewed to low complexity. Residues 1 to 53 (MASGSRATPTRSPSSARPAAPRHQHHHSQSSGGSTSRAGGGGGGGGGGGGGAA) are disordered. A compositionally biased stretch (gly residues) spans 38-52 (AGGGGGGGGGGGGGA). Positions 259-442 (DVKLLCDTVV…AFGLQLNMEL (184 aa)) constitute a GAF domain. A phytochromobilin-binding site is contributed by C364. 2 PAS domains span residues 661 to 732 (VARE…LRGD) and 795 to 866 (DYKA…MIVL). Positions 943–1161 (YIYQEIKNPL…FFHIVLELPQ (219 aa)) constitute a Histidine kinase domain.

The protein belongs to the phytochrome family. Homodimer. In terms of processing, contains one covalently linked phytochromobilin chromophore.

Regulatory photoreceptor which exists in two forms that are reversibly interconvertible by light: the Pr form that absorbs maximally in the red region of the spectrum and the Pfr form that absorbs maximally in the far-red region. Photoconversion of Pr to Pfr induces an array of morphogenic responses, whereas reconversion of Pfr to Pr cancels the induction of those responses. Pfr controls the expression of a number of nuclear genes including those encoding the small subunit of ribulose-bisphosphate carboxylase, chlorophyll A/B binding protein, protochlorophyllide reductase, rRNA, etc. It also controls the expression of its own gene(s) in a negative feedback fashion. This is Phytochrome B (PHYB) from Oryza sativa subsp. japonica (Rice).